Here is a 304-residue protein sequence, read N- to C-terminus: Foldase protein PrsA (304 aa).

Positions 1-19 are cleaved as a signal peptide; it reads MKKKLLSVAAVASVFTLAA. C20 is lipidated: N-palmitoyl cysteine. Residue C20 is the site of S-diacylglycerol cysteine attachment. The PpiC domain occupies 140–231; the sequence is KVEVKASHIL…FGYHIIKVTD (92 aa). The segment at 285 to 304 is disordered; sequence FDLDKQEQQQMQQQMQQQQQ. A compositionally biased stretch (low complexity) spans 292-304; the sequence is QQQMQQQMQQQQQ.

Belongs to the PrsA family.

It localises to the cell membrane. It catalyses the reaction [protein]-peptidylproline (omega=180) = [protein]-peptidylproline (omega=0). Plays a major role in protein secretion by helping the post-translocational extracellular folding of several secreted proteins. This chain is Foldase protein PrsA, found in Exiguobacterium sibiricum (strain DSM 17290 / CCUG 55495 / CIP 109462 / JCM 13490 / 255-15).